We begin with the raw amino-acid sequence, 126 residues long: Large ribosomal subunit protein bL12 (126 aa).

It belongs to the bacterial ribosomal protein bL12 family. In terms of assembly, homodimer. Part of the ribosomal stalk of the 50S ribosomal subunit. Forms a multimeric L10(L12)X complex, where L10 forms an elongated spine to which 2 to 4 L12 dimers bind in a sequential fashion. Binds GTP-bound translation factors.

In terms of biological role, forms part of the ribosomal stalk which helps the ribosome interact with GTP-bound translation factors. Is thus essential for accurate translation. This is Large ribosomal subunit protein bL12 from Methylorubrum populi (strain ATCC BAA-705 / NCIMB 13946 / BJ001) (Methylobacterium populi).